We begin with the raw amino-acid sequence, 158 residues long: MKPRHRRLTLIALVLGGLGLSAGLALTAFQDNLVFFFTPSEVMAREAPIDRPIRIGGLVKAGSVEREAASARVHFKVTDTAESITVSYDGILPDLFREGQGVVAQGRLGADGRFHATQVLARHDETYMPAEAKEALDRIGQGNGTPGPDGHPETTTAY.

Topologically, residues 1–7 (MKPRHRR) are cytoplasmic. Residues 8 to 28 (LTLIALVLGGLGLSAGLALTA) traverse the membrane as a helical; Signal-anchor for type II membrane protein segment. Over 29–158 (FQDNLVFFFT…DGHPETTTAY (130 aa)) the chain is Periplasmic. Heme-binding residues include H123 and Y127. Positions 138–158 (RIGQGNGTPGPDGHPETTTAY) are disordered.

This sequence belongs to the CcmE/CycJ family.

It is found in the cell inner membrane. In terms of biological role, heme chaperone required for the biogenesis of c-type cytochromes. Transiently binds heme delivered by CcmC and transfers the heme to apo-cytochromes in a process facilitated by CcmF and CcmH. This is Cytochrome c-type biogenesis protein CcmE from Alkalilimnicola ehrlichii (strain ATCC BAA-1101 / DSM 17681 / MLHE-1).